The sequence spans 467 residues: Metal transporter cnnm-4 (467 aa).

Residues 1–110 (MELYAAGRYD…EIPEGKDKTR (110 aa)) are Extracellular-facing. The N-linked (GlcNAc...) asparagine glycan is linked to Asn-61. Residues 107-293 (DKTRVYFMMP…LEDEEAADGN (187 aa)) form the CNNM transmembrane domain. The helical transmembrane segment at 111 to 131 (VYFMMPLLVLCLGLSATFSGL) threads the bilayer. Residues 132–170 (NLAIMSFSINDLKLIQESDSDKLMKQRAMDVMRLRRNSN) are Cytoplasmic-facing. The chain crosses the membrane as a helical span at residues 171–191 (FVLVTIIFGNCFCNISITLLM). Over 192 to 196 (NYFAE) the chain is Extracellular. A helical transmembrane segment spans residues 197–217 (FYGFGGFIFVELISTALLLIF). Over 218 to 238 (TEILPSLIFTKNALAIASRLQ) the chain is Cytoplasmic. The helical transmembrane segment at 239 to 259 (YFVIFTMCITSPISYPLAMLL) threads the bilayer. The Extracellular portion of the chain corresponds to 260 to 467 (NIILGKENAD…IFDEKDARQE (208 aa)). 2 consecutive CBS domains span residues 317-381 (MTEI…GSDT) and 394-461 (KRRK…IFDE). Asn-364 carries N-linked (GlcNAc...) asparagine glycosylation.

The protein belongs to the ACDP family.

The protein localises to the cell membrane. Its function is as follows. Probable metal transporter. Probably acts redundantly with the other metal transport proteins cnnm-1, cnnm-2, cnnm-3 and cnnm-5 to regulate Mg(2+) homeostasis. The polypeptide is Metal transporter cnnm-4 (Caenorhabditis elegans).